Here is a 72-residue protein sequence, read N- to C-terminus: Translation initiation factor IF-1 (72 aa).

Residues 1–72 form the S1-like domain; it reads MAKEDVIEVE…TRGRITYRFK (72 aa).

It belongs to the IF-1 family. In terms of assembly, component of the 30S ribosomal translation pre-initiation complex which assembles on the 30S ribosome in the order IF-2 and IF-3, IF-1 and N-formylmethionyl-tRNA(fMet); mRNA recruitment can occur at any time during PIC assembly.

It localises to the cytoplasm. One of the essential components for the initiation of protein synthesis. Stabilizes the binding of IF-2 and IF-3 on the 30S subunit to which N-formylmethionyl-tRNA(fMet) subsequently binds. Helps modulate mRNA selection, yielding the 30S pre-initiation complex (PIC). Upon addition of the 50S ribosomal subunit IF-1, IF-2 and IF-3 are released leaving the mature 70S translation initiation complex. In Listeria innocua serovar 6a (strain ATCC BAA-680 / CLIP 11262), this protein is Translation initiation factor IF-1.